The sequence spans 139 residues: Small integral membrane protein 34 (139 aa).

The chain crosses the membrane as a helical span at residues Gly46 to Phe66.

It localises to the membrane. The sequence is that of Small integral membrane protein 34 from Homo sapiens (Human).